A 246-amino-acid chain; its full sequence is MKLIIGVITLFPQMFDALKSGVIGRALKQDRLTLSFWNPRDYATDPHRTVDDRPYGGGPGMVMKFEPLALALKAAKAQLGENTKVIHLTPQGKLLTQAIVREKIHASPLILLAGRYEGIDERLIEAEVDEEWSIGDYILSGGELPAMVLIDAMTRLLPGVLGHKDSASQDSFTAGLLDYLHYTRPEKIADRPVPSVLLSGDHEAISRWRLKQSLGRTWQRRQDLIKRRSLSENEQRLLDEFFEESS.

S-adenosyl-L-methionine-binding positions include G114 and 134–139 (IGDYIL).

It belongs to the RNA methyltransferase TrmD family. As to quaternary structure, homodimer.

It is found in the cytoplasm. The catalysed reaction is guanosine(37) in tRNA + S-adenosyl-L-methionine = N(1)-methylguanosine(37) in tRNA + S-adenosyl-L-homocysteine + H(+). Its function is as follows. Specifically methylates guanosine-37 in various tRNAs. The chain is tRNA (guanine-N(1)-)-methyltransferase from Coxiella burnetii (strain RSA 331 / Henzerling II).